We begin with the raw amino-acid sequence, 29 residues long: GKPICGETCFKGKCYTPGCTCSYPVCKKN.

A cross-link (cyclopeptide (Gly-Asn)) is located at residues 1–29 (GKPICGETCFKGKCYTPGCTCSYPVCKKN). Cystine bridges form between Cys-5–Cys-19, Cys-9–Cys-21, and Cys-14–Cys-26.

It belongs to the cyclotide family. In terms of processing, this is a cyclic peptide.

Probably participates in a plant defense mechanism. In Melicytus dentatus (Tree violet), this protein is Cyclotide mden-C.